We begin with the raw amino-acid sequence, 105 residues long: Small ribosomal subunit protein uS10 (105 aa).

It belongs to the universal ribosomal protein uS10 family. As to quaternary structure, part of the 30S ribosomal subunit.

Its function is as follows. Involved in the binding of tRNA to the ribosomes. The chain is Small ribosomal subunit protein uS10 from Francisella tularensis subsp. mediasiatica (strain FSC147).